The chain runs to 233 residues: Orotidine 5'-phosphate decarboxylase (233 aa).

Substrate-binding positions include Asp13, Lys35, 62–71 (DLKFHDIPNT), Thr122, Arg182, Gln191, Gly211, and Arg212. The active-site Proton donor is Lys64.

This sequence belongs to the OMP decarboxylase family. Type 1 subfamily. Homodimer.

It catalyses the reaction orotidine 5'-phosphate + H(+) = UMP + CO2. The protein operates within pyrimidine metabolism; UMP biosynthesis via de novo pathway; UMP from orotate: step 2/2. Its function is as follows. Catalyzes the decarboxylation of orotidine 5'-monophosphate (OMP) to uridine 5'-monophosphate (UMP). This is Orotidine 5'-phosphate decarboxylase from Pseudomonas putida (strain GB-1).